A 426-amino-acid chain; its full sequence is Serine--tRNA ligase (426 aa).

232–234 (TAE) is a binding site for L-serine. 263–265 (RSE) contacts ATP. Glu-286 provides a ligand contact to L-serine. Position 350–353 (350–353 (EISS)) interacts with ATP. Ser-385 contacts L-serine.

Belongs to the class-II aminoacyl-tRNA synthetase family. Type-1 seryl-tRNA synthetase subfamily. As to quaternary structure, homodimer. The tRNA molecule binds across the dimer.

Its subcellular location is the cytoplasm. The catalysed reaction is tRNA(Ser) + L-serine + ATP = L-seryl-tRNA(Ser) + AMP + diphosphate + H(+). The enzyme catalyses tRNA(Sec) + L-serine + ATP = L-seryl-tRNA(Sec) + AMP + diphosphate + H(+). It participates in aminoacyl-tRNA biosynthesis; selenocysteinyl-tRNA(Sec) biosynthesis; L-seryl-tRNA(Sec) from L-serine and tRNA(Sec): step 1/1. In terms of biological role, catalyzes the attachment of serine to tRNA(Ser). Is also able to aminoacylate tRNA(Sec) with serine, to form the misacylated tRNA L-seryl-tRNA(Sec), which will be further converted into selenocysteinyl-tRNA(Sec). In Pediococcus pentosaceus (strain ATCC 25745 / CCUG 21536 / LMG 10740 / 183-1w), this protein is Serine--tRNA ligase.